The chain runs to 840 residues: Lysine-specific demethylase JMJ27 (840 aa).

The span at 1-10 (MEKMRGKRIR) shows a compositional bias: basic residues. Positions 1-52 (MEKMRGKRIRPRDSGELVEDGRSESERKTRKKENDVVSKGRIGRGRGRGEVS) are disordered. The segment covering 11–38 (PRDSGELVEDGRSESERKTRKKENDVVS) has biased composition (basic and acidic residues). The Zn(2+) site is built by cysteine 80, cysteine 83, cysteine 95, cysteine 98, cysteine 104, cysteine 107, cysteine 124, and cysteine 127. The RING-type; degenerate zinc finger occupies 80–127 (CHHCKILTSESDLIFCSKCNKKCYCFDCIKRSYSERTHEEVRAACPFC). Residues 502–798 (PKSGILNLAT…ECLRLTQEFR (297 aa)) enclose the JmjC domain. Residues histidine 546 and aspartate 548 each coordinate Fe cation. Residues 594–678 (KEASELENKS…ETDGNTNERS (85 aa)) form a disordered region. Over residues 595 to 620 (EASELENKSMKEVDESKKDLKDKAAN) the composition is skewed to basic and acidic residues. Positions 621 to 631 (EEQSNNSSRPS) are enriched in polar residues. Basic and acidic residues predominate over residues 635 to 646 (EAEKVIISKEDN). The segment covering 647–659 (PTQPAVSTSVESI) has biased composition (polar residues). Residues 660-678 (QEQKLDAPKETDGNTNERS) are compositionally biased toward basic and acidic residues. Histidine 766 contributes to the Fe cation binding site.

It belongs to the JARID1 histone demethylase family. Interacts with RPN1A. Fe(2+) serves as cofactor. In terms of tissue distribution, expressed in seedlings, inflorescences, flowers and siliques, and, at low levels, in roots, leaves (including vascular bundles) and stems. Particularly observed in stomatal guard cells.

It localises to the nucleus. Its subcellular location is the cytoplasm. The enzyme catalyses N(6),N(6)-dimethyl-L-lysyl(9)-[histone H3] + 2-oxoglutarate + O2 = N(6)-methyl-L-lysyl(9)-[histone H3] + formaldehyde + succinate + CO2. The catalysed reaction is N(6)-methyl-L-lysyl(9)-[histone H3] + 2-oxoglutarate + O2 = L-lysyl(9)-[histone H3] + formaldehyde + succinate + CO2. It carries out the reaction N(6),N(6)-dimethyl-L-lysyl(9)-[histone H3] + 2 2-oxoglutarate + 2 O2 = L-lysyl(9)-[histone H3] + 2 formaldehyde + 2 succinate + 2 CO2. Histone demethylase that demethylates 'Lys-9' (H3K9me) of histone H3 with a specific activity for H3K9me1 and H3K9me2. No activity on H3K4, H3K27, H3K36, H3R2 and H4R3 methyl marks, but weak activity on H3K9me3. Involved in regulation of gene expression. Regulates flowering time by repressing the major flowering regulator CONSTANS (CO) and promoting FLOWERING LOCUS C (FLC). Exhibits a positive impact on abscisic acid- (ABA), hydrogen peroxide- (H(2)O(2)) and calcium- (Ca(2+)) induced stomatal closure. Promotes stomatal-closure-dependent drought-stress responses through its histone demethylase activity toward at least GOLS2 and RD20 loci, thus protecting them from silencing by removing H3K9me2 marks in drought conditions. Required for plant defenses leading to resistance against the virulent bacterial pathogen Pseudomonas syringae pv. tomato DC3000 (Pst DC3000) via a negative regulation of WRKY25 (a repressor of defense) and by triggering the expression of several pathogenesis-related (PR) proteins (e.g. PR1, PR3, PR4 and PR5). In Arabidopsis thaliana (Mouse-ear cress), this protein is Lysine-specific demethylase JMJ27.